A 1423-amino-acid polypeptide reads, in one-letter code: Protein phosphatase Slingshot homolog 2 (1423 aa).

The segment at 1–37 is disordered; the sequence is MALVTVQRSPTPSTTSSPCASEADSGEEECRSQPRSI. Over residues 9–18 the composition is skewed to low complexity; sequence SPTPSTTSSP. Phosphoserine is present on residues Ser17, Ser25, and Ser36. One can recognise a DEK-C domain in the interval 248–303; sequence ERTERLIKTKLREIMMQKDLENITSKEIRTELEMQMVCNLREFKEFIDNEMIVILG. The region spanning 307-448 is the Tyrosine-protein phosphatase domain; it reads SPTQIFEHVF…LEEYQGILLA (142 aa). The Phosphocysteine intermediate role is filled by Cys392. Residues Ser461, Ser487, Ser534, Ser631, and Ser633 each carry the phosphoserine modification. Disordered stretches follow at residues 617–641, 664–684, 696–728, 797–825, 840–862, 877–954, 962–981, 1019–1041, 1070–1108, and 1144–1179; these read TSPL…CQTE, QETR…GGRN, PSKV…QSKA, ENKP…MCNP, EGEP…AKWY, LRQE…NATV, FDHL…TQQE, TSPN…EQGL, SLHP…SSLS, and TEQS…YKDS. Positions 621–635 are enriched in pro residues; sequence KDPPMSPDPESPSPQ. Over residues 664-680 the composition is skewed to basic and acidic residues; that stretch reads QETRSRSFSHSRMEELG. Residues 889-904 are compositionally biased toward polar residues; that stretch reads TCTSLSTRKNSKNDSS. Residues 910–932 show a composition bias toward basic and acidic residues; the sequence is PKGKSDEAPPEHSFVLKEPEMSK. The span at 941–953 shows a compositional bias: polar residues; sequence EAGSLSHSEQNAT. Positions 1019–1034 are enriched in polar residues; that stretch reads TSPNHTGPGSEIATSE. The span at 1144–1172 shows a compositional bias: polar residues; sequence TEQSSTTDEPSAEQVSWEESQESPLSSGS. Ser1217 is modified (phosphoserine). At Thr1422 the chain carries Phosphothreonine.

This sequence belongs to the protein-tyrosine phosphatase family. As to quaternary structure, interacts with filamentous actin.

It is found in the cytoplasm. The protein localises to the cytoskeleton. It localises to the cell junction. The protein resides in the focal adhesion. Its subcellular location is the cytoplasmic vesicle. It is found in the secretory vesicle. The protein localises to the acrosome. The enzyme catalyses O-phospho-L-tyrosyl-[protein] + H2O = L-tyrosyl-[protein] + phosphate. It catalyses the reaction O-phospho-L-seryl-[protein] + H2O = L-seryl-[protein] + phosphate. It carries out the reaction O-phospho-L-threonyl-[protein] + H2O = L-threonyl-[protein] + phosphate. Its function is as follows. Protein phosphatase which regulates actin filament dynamics. Dephosphorylates and activates the actin binding/depolymerizing factor cofilin, which subsequently binds to actin filaments and stimulates their disassembly. Inhibitory phosphorylation of cofilin is mediated by LIMK1, which may also be dephosphorylated and inactivated by this protein. Required for spermatogenesis. Involved in acrosome biogenesis, probably by regulating cofilin-mediated actin cytoskeleton remodeling during proacrosomal vesicle fusion and/or Golgi to perinuclear vesicle trafficking. The polypeptide is Protein phosphatase Slingshot homolog 2 (SSH2) (Homo sapiens (Human)).